Reading from the N-terminus, the 206-residue chain is Large ribosomal subunit protein uL4 (206 aa).

Residues 60-84 form a disordered region; it reads TAKPFKQKGTGHARQGSKRSPQFRG. The span at 64–76 shows a compositional bias: basic residues; sequence FKQKGTGHARQGS.

Belongs to the universal ribosomal protein uL4 family. In terms of assembly, part of the 50S ribosomal subunit.

In terms of biological role, one of the primary rRNA binding proteins, this protein initially binds near the 5'-end of the 23S rRNA. It is important during the early stages of 50S assembly. It makes multiple contacts with different domains of the 23S rRNA in the assembled 50S subunit and ribosome. Functionally, forms part of the polypeptide exit tunnel. In Rhodospirillum rubrum (strain ATCC 11170 / ATH 1.1.1 / DSM 467 / LMG 4362 / NCIMB 8255 / S1), this protein is Large ribosomal subunit protein uL4.